A 964-amino-acid chain; its full sequence is Lon protease homolog, mitochondrial (964 aa).

The Lon N-terminal domain maps to 89–300 (VIALPLPHRP…LTLELVKKEM (212 aa)). Residue 455 to 462 (GPPGVGKT) coordinates ATP. The tract at residues 663–740 (GVSNEPDHES…TSKGNKGTDG (78 aa)) is disordered. Over residues 673-687 (VSASVTEESGNGDNT) the composition is skewed to polar residues. A compositionally biased stretch (basic and acidic residues) spans 688–698 (TTKDEILKDPA). The span at 703–712 (SVTNNVTNPA) shows a compositional bias: polar residues. The Lon proteolytic domain maps to 773–957 (HTPVGVVMGL…SEIYDLAFQS (185 aa)). Residues Ser863 and Lys906 contribute to the active site.

Belongs to the peptidase S16 family. In terms of assembly, homoheptamer. Organized in a ring with a central cavity.

It is found in the mitochondrion matrix. The catalysed reaction is Hydrolysis of proteins in presence of ATP.. In terms of biological role, ATP-dependent serine protease that mediates the selective degradation of misfolded, unassembled or oxidatively damaged polypeptides as well as certain short-lived regulatory proteins in the mitochondrial matrix. May also have a chaperone function in the assembly of inner membrane protein complexes. Participates in the regulation of mitochondrial gene expression and in the maintenance of the integrity of the mitochondrial genome. Binds to mitochondrial DNA in a site-specific manner. The polypeptide is Lon protease homolog, mitochondrial (LON2) (Zea mays (Maize)).